Here is a 339-residue protein sequence, read N- to C-terminus: Mycothiol acetyltransferase (339 aa).

2 N-acetyltransferase domains span residues 8-174 and 176-339; these read YEQL…QGLT and LTYP…GELN. A 1D-myo-inositol 2-(L-cysteinylamino)-2-deoxy-alpha-D-glucopyranoside-binding site is contributed by E39. Residue 85 to 87 coordinates acetyl-CoA; the sequence is LAV. Positions 207, 254, and 270 each coordinate 1D-myo-inositol 2-(L-cysteinylamino)-2-deoxy-alpha-D-glucopyranoside. Residue 274–276 participates in acetyl-CoA binding; that stretch reads VCL. Y308 serves as a coordination point for 1D-myo-inositol 2-(L-cysteinylamino)-2-deoxy-alpha-D-glucopyranoside.

It belongs to the acetyltransferase family. MshD subfamily. Monomer.

The catalysed reaction is 1D-myo-inositol 2-(L-cysteinylamino)-2-deoxy-alpha-D-glucopyranoside + acetyl-CoA = mycothiol + CoA + H(+). Catalyzes the transfer of acetyl from acetyl-CoA to desacetylmycothiol (Cys-GlcN-Ins) to form mycothiol. The sequence is that of Mycothiol acetyltransferase from Corynebacterium urealyticum (strain ATCC 43042 / DSM 7109).